The following is a 239-amino-acid chain: Sugar fermentation stimulation protein homolog (239 aa).

The protein belongs to the SfsA family.

The protein is Sugar fermentation stimulation protein homolog of Desulforamulus reducens (strain ATCC BAA-1160 / DSM 100696 / MI-1) (Desulfotomaculum reducens).